We begin with the raw amino-acid sequence, 304 residues long: Dihydroorotate dehydrogenase B (NAD(+)), catalytic subunit (304 aa).

Residues S21 and 45–46 (KA) each bind FMN. Substrate-binding positions include K45 and 69-73 (NAIGL). 2 residues coordinate FMN: N99 and N127. N127 is a binding site for substrate. C130 (nucleophile) is an active-site residue. FMN-binding residues include K165 and I191. Position 192-193 (192-193 (NT)) interacts with substrate. FMN is bound by residues G217, 243–244 (GG), and 265–266 (GT).

This sequence belongs to the dihydroorotate dehydrogenase family. Type 1 subfamily. In terms of assembly, heterotetramer of 2 PyrK and 2 PyrD type B subunits. FMN is required as a cofactor.

The protein localises to the cytoplasm. The catalysed reaction is (S)-dihydroorotate + NAD(+) = orotate + NADH + H(+). It functions in the pathway pyrimidine metabolism; UMP biosynthesis via de novo pathway; orotate from (S)-dihydroorotate (NAD(+) route): step 1/1. Its function is as follows. Catalyzes the conversion of dihydroorotate to orotate with NAD(+) as electron acceptor. This is Dihydroorotate dehydrogenase B (NAD(+)), catalytic subunit (pyrD) from Listeria monocytogenes serotype 4a (strain HCC23).